Reading from the N-terminus, the 209-residue chain is Pyridoxal 5'-phosphate synthase subunit PdxT (209 aa).

Residue 58 to 60 (GES) participates in L-glutamine binding. Catalysis depends on Cys-90, which acts as the Nucleophile. L-glutamine is bound by residues Arg-119 and 148-149 (IR). Active-site charge relay system residues include His-185 and Glu-187.

The protein belongs to the glutaminase PdxT/SNO family. In terms of assembly, in the presence of PdxS, forms a dodecamer of heterodimers. Only shows activity in the heterodimer.

The enzyme catalyses aldehydo-D-ribose 5-phosphate + D-glyceraldehyde 3-phosphate + L-glutamine = pyridoxal 5'-phosphate + L-glutamate + phosphate + 3 H2O + H(+). The catalysed reaction is L-glutamine + H2O = L-glutamate + NH4(+). It participates in cofactor biosynthesis; pyridoxal 5'-phosphate biosynthesis. Functionally, catalyzes the hydrolysis of glutamine to glutamate and ammonia as part of the biosynthesis of pyridoxal 5'-phosphate. The resulting ammonia molecule is channeled to the active site of PdxS. The sequence is that of Pyridoxal 5'-phosphate synthase subunit PdxT from Clavibacter sepedonicus (Clavibacter michiganensis subsp. sepedonicus).